Consider the following 980-residue polypeptide: MAETSVFSIMMLTVMTAVGRGATDRPGRVSRCGERPSANASVTYNLLSRIVGGTSAVKGESPWMVSLKRDGKHFCGGTIISDKHVLTAAHCVLDKNIEYHVRVSIGDHDFTVYERSEQIFAIKAVFKHPNFNPIRPFNYDLAIVELGESIAFDKDIQPACLPSPDDVFPTGTLCIALGWGRLQENGRLPSSLQQVVLPLIEYRKCLSIMETVDRRLAFETVVCAGFPEGGKDACQGDSGGPFLCQRSQGRWVLVGVTSWGLGCARKWVDNILDPPERRGSPGVFTDIQRLLNWLSANLNQDKPDFPTYEVQCSTNDGIEKGTAGEILLPTDYRKYYSNNEKCIWTIIVPKGKHILLTFNSFNVEWDYSCDLDYLVIYSALGRLIGKFCGDVRPRPLLIADASVTLKFISDFQEYKTGFSLFYQAVEPNTYPDSDCGSVAVIFEEGEIQTMNHPHVYSSHANCQWVVHSPANHIIKITFLVFEVEPSEGCIFDRLVVYHDLQGTMVAGIFCGFSLPDPVLSVSNVMQITFTSDYSVNYLGFQAVISFVLPSSPVKSETQWKGNNQPRKNQDAMQHYEEGCGVSPLPPRFIHHNIIKAEEAMPNSWPWHVSINFGNKHLCNGAILSKTFVVTSANCVADREEFPSVGLIVAGLHDLESSTDAQKRTVEYVIVHPDYNRLSKDYDVALIHVQMPFQYNSHVQPICLPDGHSKLEPSKLCVVSGWDLNVELSTKLQQLEVPVLMDDVCKKYYDGITDRMFCAGVIAEEDNVSCLAQSGAPLVCQSDPGTYVIFGIVSWGVGCNEPPKAGVYSSVPLFIPWIMETILSVAGIANTDTEPHHPLIPPDKLSQEKALLPDSPPSNDSSSSQDIYVTCKDVMSLQSPGEIKLVASAQDGPEGGRCQLIFQAPEDHFILLHFKQLSHEHYSLIIYEGASSNKTFKAQLTEEKIPTIMKSVGPVITIEASSTAQDSALHLWLSYSFHNQN.

The first 21 residues, 1 to 21, serve as a signal peptide directing secretion; that stretch reads MAETSVFSIMMLTVMTAVGRG. A propeptide spans 22–49 (activation peptide); it reads ATDRPGRVSRCGERPSANASVTYNLLSR. N-linked (GlcNAc...) asparagine glycosylation is present at N39. Residues 50–299 form the Peptidase S1 1 domain; the sequence is IVGGTSAVKG…LLNWLSANLN (250 aa). Residues C75 and C91 are joined by a disulfide bond. H90 (charge relay system) is an active-site residue. Ca(2+) is bound by residues V112 and E117. Residue D140 is the Charge relay system of the active site. 11 disulfides stabilise this stretch: C174/C244, C205/C223, C234/C263, C312/C342, C369/C388, C435/C462, C489/C510, C618/C634, C716/C779, C744/C757, and C769/C798. S238 acts as the Charge relay system in catalysis. CUB domains are found at residues 312 to 425 and 435 to 547; these read CSTN…YQAV and CGSV…ISFV. The Peptidase S1 2 domain maps to 593–822; that stretch reads IIKAEEAMPN…FIPWIMETIL (230 aa). Residues 593–980 constitute a propeptide, activation peptide; that stretch reads IIKAEEAMPN…WLSYSFHNQN (388 aa). N766 is a glycosylation site (N-linked (GlcNAc...) asparagine). The interval 835–863 is disordered; that stretch reads HHPLIPPDKLSQEKALLPDSPPSNDSSSS. N-linked (GlcNAc...) asparagine glycosylation is found at N858 and N932.

The protein belongs to the peptidase S1 family. In terms of processing, the catalytically inactive 108 kDa form is processed both N- and C-terminally to give rise to catalytically active and inactive forms. As to expression, differentially expressed in the oviductal pars recta (PR) region.

The protein localises to the secreted. The enzyme catalyses Preferential cleavage at 371-Gly-Ser-Arg-|-Trp-374 of glycoprotein gp43 in Xenopus laevis coelemic egg envelope to yield gp41.. Its function is as follows. Mediates gamete interaction by affecting the vitelline coat. In Rhinella arenarum (Argentine common toad), this protein is Ovochymase-2 (OVCH2).